The chain runs to 154 residues: Large ribosomal subunit protein uL22 (154 aa).

This sequence belongs to the universal ribosomal protein uL22 family. As to quaternary structure, part of the 50S ribosomal subunit.

Its function is as follows. This protein binds specifically to 23S rRNA. It makes multiple contacts with different domains of the 23S rRNA in the assembled 50S subunit and ribosome. The globular domain of the protein is located near the polypeptide exit tunnel on the outside of the subunit, while an extended beta-hairpin is found that lines the wall of the exit tunnel in the center of the 70S ribosome. The protein is Large ribosomal subunit protein uL22 of Natronomonas pharaonis (strain ATCC 35678 / DSM 2160 / CIP 103997 / JCM 8858 / NBRC 14720 / NCIMB 2260 / Gabara) (Halobacterium pharaonis).